The primary structure comprises 91 residues: Large ribosomal subunit protein bL27 (91 aa).

The segment covering 1-10 (MAQKKGGGST) has biased composition (gly residues). The disordered stretch occupies residues 1–20 (MAQKKGGGSTRNGRDSQPKM).

The protein belongs to the bacterial ribosomal protein bL27 family.

This is Large ribosomal subunit protein bL27 from Verminephrobacter eiseniae (strain EF01-2).